A 91-amino-acid polypeptide reads, in one-letter code: Cell division protein ZapA (91 aa).

A coiled-coil region spans residues Leu58–Asp91.

This sequence belongs to the ZapA family. Type 2 subfamily. As to quaternary structure, homodimer. Interacts with FtsZ.

It localises to the cytoplasm. In terms of biological role, activator of cell division through the inhibition of FtsZ GTPase activity, therefore promoting FtsZ assembly into bundles of protofilaments necessary for the formation of the division Z ring. It is recruited early at mid-cell but it is not essential for cell division. The sequence is that of Cell division protein ZapA from Geobacillus kaustophilus (strain HTA426).